The following is a 446-amino-acid chain: Glutamyl-tRNA reductase (446 aa).

Substrate contacts are provided by residues 49–52 (TCNR), Ser108, 113–115 (ETQ), and Gln119. The active-site Nucleophile is Cys50. Position 188–193 (188–193 (GAGKMS)) interacts with NADP(+).

Belongs to the glutamyl-tRNA reductase family. In terms of assembly, homodimer.

It carries out the reaction (S)-4-amino-5-oxopentanoate + tRNA(Glu) + NADP(+) = L-glutamyl-tRNA(Glu) + NADPH + H(+). Its pathway is porphyrin-containing compound metabolism; protoporphyrin-IX biosynthesis; 5-aminolevulinate from L-glutamyl-tRNA(Glu): step 1/2. Catalyzes the NADPH-dependent reduction of glutamyl-tRNA(Glu) to glutamate 1-semialdehyde (GSA). In Desulforudis audaxviator (strain MP104C), this protein is Glutamyl-tRNA reductase.